The following is a 224-amino-acid chain: Cytidylate kinase (224 aa).

10-18 (GPSGVGKGT) lines the ATP pocket.

It belongs to the cytidylate kinase family. Type 1 subfamily.

The protein resides in the cytoplasm. The enzyme catalyses CMP + ATP = CDP + ADP. The catalysed reaction is dCMP + ATP = dCDP + ADP. This is Cytidylate kinase from Haemophilus ducreyi (strain 35000HP / ATCC 700724).